Reading from the N-terminus, the 159-residue chain is Phosphopantetheine adenylyltransferase (159 aa).

Thr-9 is a binding site for substrate. Residues 9 to 10 (TF) and His-17 contribute to the ATP site. Lys-41, Leu-73, and Arg-87 together coordinate substrate. Residues 88 to 90 (GLR), Glu-98, and 123 to 129 (YSFISST) contribute to the ATP site.

The protein belongs to the bacterial CoaD family. Homohexamer. The cofactor is Mg(2+).

It is found in the cytoplasm. The catalysed reaction is (R)-4'-phosphopantetheine + ATP + H(+) = 3'-dephospho-CoA + diphosphate. The protein operates within cofactor biosynthesis; coenzyme A biosynthesis; CoA from (R)-pantothenate: step 4/5. In terms of biological role, reversibly transfers an adenylyl group from ATP to 4'-phosphopantetheine, yielding dephospho-CoA (dPCoA) and pyrophosphate. The chain is Phosphopantetheine adenylyltransferase from Pseudomonas syringae pv. tomato (strain ATCC BAA-871 / DC3000).